The chain runs to 106 residues: Large ribosomal subunit protein eL30 (106 aa).

Belongs to the eukaryotic ribosomal protein eL30 family. Component of the large ribosomal subunit. Mature ribosomes consist of a small (40S) and a large (60S) subunit. The 40S subunit contains about 32 different proteins and 1 molecule of RNA (18S). The 60S subunit contains 45 different proteins and 3 molecules of RNA (25S, 5.8S and 5S).

It localises to the cytoplasm. In terms of biological role, component of the ribosome, a large ribonucleoprotein complex responsible for the synthesis of proteins in the cell. The small ribosomal subunit (SSU) binds messenger RNAs (mRNAs) and translates the encoded message by selecting cognate aminoacyl-transfer RNA (tRNA) molecules. The large subunit (LSU) contains the ribosomal catalytic site termed the peptidyl transferase center (PTC), which catalyzes the formation of peptide bonds, thereby polymerizing the amino acids delivered by tRNAs into a polypeptide chain. The nascent polypeptides leave the ribosome through a tunnel in the LSU and interact with protein factors that function in enzymatic processing, targeting, and the membrane insertion of nascent chains at the exit of the ribosomal tunnel. This chain is Large ribosomal subunit protein eL30, found in Candida albicans (strain SC5314 / ATCC MYA-2876) (Yeast).